The following is a 265-amino-acid chain: Acyl-[acyl-carrier-protein]--UDP-N-acetylglucosamine O-acyltransferase (265 aa).

The protein belongs to the transferase hexapeptide repeat family. LpxA subfamily. As to quaternary structure, homotrimer.

Its subcellular location is the cytoplasm. The enzyme catalyses a (3R)-hydroxyacyl-[ACP] + UDP-N-acetyl-alpha-D-glucosamine = a UDP-3-O-[(3R)-3-hydroxyacyl]-N-acetyl-alpha-D-glucosamine + holo-[ACP]. Its pathway is glycolipid biosynthesis; lipid IV(A) biosynthesis; lipid IV(A) from (3R)-3-hydroxytetradecanoyl-[acyl-carrier-protein] and UDP-N-acetyl-alpha-D-glucosamine: step 1/6. Functionally, involved in the biosynthesis of lipid A, a phosphorylated glycolipid that anchors the lipopolysaccharide to the outer membrane of the cell. The chain is Acyl-[acyl-carrier-protein]--UDP-N-acetylglucosamine O-acyltransferase from Polynucleobacter asymbioticus (strain DSM 18221 / CIP 109841 / QLW-P1DMWA-1) (Polynucleobacter necessarius subsp. asymbioticus).